The primary structure comprises 480 residues: MNKLILSILSVLLIVSIASAGNGIDISSGTNPSSSDLACLAKQNSKIIVQTWSGGYGFNSNVPSIVQAAKSAGLSVDLYAFLCSQCSGITDPAEAIKTLVSKLNGVKYGTLWIDVEQCNGCWSSTLSSNAQYVQTAVQTASQLGVNVGVYSSEGEWPQTVGSLTSLSSFPLWYAHYDNNPSFSDQGYNFGGWSKAVMKQYQGTTTQCGVSVDLNWFPGSGSSTTSSSATSSSTTGRPLTSSSGAGTGGHSSSSGAGTGGHSSTTGGQTSGQTSGQTSGSSNQPLSSGSSQDSSNSGSSNQPLSSGSSQDSSNSGSSNQPLSSGSSQTSGQTSGSSNQPLSSGSSQDSGSNSGSQGTTGSQSGSSSSNPLTSGSQSGSSGSQSTSSGSQSGSSGATGTSSTASSTSATGSSSTGSSTGSSSGSNDSGSNDSGSSSGSNNSGSSSGSNNSGSSSGSASSSGSSGSSGSGNYTSGSGNGAFLF.

Residues 1-20 (MNKLILSILSVLLIVSIASA) form the signal peptide. The Ch-type lysozyme domain occupies 21 to 231 (GNGIDISSGT…STTSSSATSS (211 aa)). Active-site residues include Asp-25, Asp-114, and Glu-116. Positions 219–472 (SGSSTTSSSA…SSGSGNYTSG (254 aa)) are enriched in low complexity. Residues 219–480 (SGSSTTSSSA…SGSGNGAFLF (262 aa)) are disordered. N-linked (GlcNAc...) asparagine glycosylation is found at Asn-423, Asn-428, Asn-437, Asn-446, and Asn-468.

It belongs to the glycosyl hydrolase 25 family.

The protein localises to the secreted. The enzyme catalyses Hydrolysis of (1-&gt;4)-beta-linkages between N-acetylmuramic acid and N-acetyl-D-glucosamine residues in a peptidoglycan and between N-acetyl-D-glucosamine residues in chitodextrins.. The protein is Probable GH family 25 lysozyme 3 of Dictyostelium discoideum (Social amoeba).